A 145-amino-acid polypeptide reads, in one-letter code: Phospholipase A2 phospholipin (145 aa).

The N-terminal stretch at 1–15 (MVDLARRCSGSTEGR) is a signal peptide. Residues Trp24, Gly26, and Gly28 each contribute to the Ca(2+) site. 5 disulfides stabilise this stretch: Cys25/Cys46, Cys45/Cys84, Cys52/Cys77, Cys75/Cys116, and Cys121/Cys132. The active site involves His49. Asp50 lines the Ca(2+) pocket. The propeptide occupies 124–128 (KRSGR).

The protein belongs to the phospholipase A2 family. Group III subfamily. In terms of assembly, heterodimer composed of a small subunit and a large subunit; disulfid-linked. It depends on Ca(2+) as a cofactor. As to expression, expressed by the venom gland.

It is found in the secreted. It catalyses the reaction a 1,2-diacyl-sn-glycero-3-phosphocholine + H2O = a 1-acyl-sn-glycero-3-phosphocholine + a fatty acid + H(+). Scorpion venom phospholipase A2 (PLA2) that contains enzymatic activity, but does not inhibit ryanodine receptors in contrary to imperatoxin-1, another heterodimer of P.imperator venom. PLA2 catalyzes the calcium-dependent hydrolysis of the 2-acyl groups in 3-sn-phosphoglycerides. The sequence is that of Phospholipase A2 phospholipin from Pandinus imperator (Emperor scorpion).